Consider the following 219-residue polypeptide: Thiamine-phosphate synthase (219 aa).

4-amino-2-methyl-5-(diphosphooxymethyl)pyrimidine is bound by residues 44-48 and asparagine 79; that span reads QFREK. Residues aspartate 80 and aspartate 99 each contribute to the Mg(2+) site. A 4-amino-2-methyl-5-(diphosphooxymethyl)pyrimidine-binding site is contributed by serine 117. 143-145 is a binding site for 2-[(2R,5Z)-2-carboxy-4-methylthiazol-5(2H)-ylidene]ethyl phosphate; that stretch reads TST. Lysine 146 serves as a coordination point for 4-amino-2-methyl-5-(diphosphooxymethyl)pyrimidine. Residues glycine 175 and 195-196 contribute to the 2-[(2R,5Z)-2-carboxy-4-methylthiazol-5(2H)-ylidene]ethyl phosphate site; that span reads IS.

It belongs to the thiamine-phosphate synthase family. It depends on Mg(2+) as a cofactor.

It catalyses the reaction 2-[(2R,5Z)-2-carboxy-4-methylthiazol-5(2H)-ylidene]ethyl phosphate + 4-amino-2-methyl-5-(diphosphooxymethyl)pyrimidine + 2 H(+) = thiamine phosphate + CO2 + diphosphate. The enzyme catalyses 2-(2-carboxy-4-methylthiazol-5-yl)ethyl phosphate + 4-amino-2-methyl-5-(diphosphooxymethyl)pyrimidine + 2 H(+) = thiamine phosphate + CO2 + diphosphate. It carries out the reaction 4-methyl-5-(2-phosphooxyethyl)-thiazole + 4-amino-2-methyl-5-(diphosphooxymethyl)pyrimidine + H(+) = thiamine phosphate + diphosphate. The protein operates within cofactor biosynthesis; thiamine diphosphate biosynthesis; thiamine phosphate from 4-amino-2-methyl-5-diphosphomethylpyrimidine and 4-methyl-5-(2-phosphoethyl)-thiazole: step 1/1. Functionally, condenses 4-methyl-5-(beta-hydroxyethyl)thiazole monophosphate (THZ-P) and 2-methyl-4-amino-5-hydroxymethyl pyrimidine pyrophosphate (HMP-PP) to form thiamine monophosphate (TMP). In Bacillus cereus (strain 03BB102), this protein is Thiamine-phosphate synthase.